Here is a 377-residue protein sequence, read N- to C-terminus: uncharacterized protein (377 aa).

Transmembrane regions (helical) follow at residues 4–24 (LLTP…LLGT), 41–61 (ASFG…FPIT), 85–105 (IAAL…FLFG), 134–154 (FHAM…IATV), 159–179 (VYVH…PFLL), 192–212 (GAVG…IALA), 278–298 (VFGI…AGFV), 301–321 (GVGY…DLVV), 327–347 (IASV…AIGL), and 356–376 (LCFF…PVLK).

The protein to R.meliloti MosC.

The protein resides in the cell membrane. In terms of biological role, could be involved in a transport system. This is an uncharacterized protein from Sinorhizobium fredii (strain NBRC 101917 / NGR234).